Consider the following 179-residue polypeptide: MTRLEKFYQEKVVPALQKEFLYKSIMQVPTIEKISLNIGLGVASQSNKIMEEAISELSLIAGQKAVITRAKKSIASFKLREGMPIGCRVTLRKERMWDFLDKLMNFALPRVRDFRGVSENGFDGHGNFTLGIKEHSIFPELEIDRIENTKGMNITIVTSAVLDSEGKVLLDLLGMPFKK.

The protein belongs to the universal ribosomal protein uL5 family. As to quaternary structure, part of the 50S ribosomal subunit; part of the 5S rRNA/L5/L18/L25 subcomplex. Contacts the 5S rRNA and the P site tRNA. Forms a bridge to the 30S subunit in the 70S ribosome.

This is one of the proteins that bind and probably mediate the attachment of the 5S RNA into the large ribosomal subunit, where it forms part of the central protuberance. In the 70S ribosome it contacts protein S13 of the 30S subunit (bridge B1b), connecting the 2 subunits; this bridge is implicated in subunit movement. Contacts the P site tRNA; the 5S rRNA and some of its associated proteins might help stabilize positioning of ribosome-bound tRNAs. The sequence is that of Large ribosomal subunit protein uL5 from Lawsonia intracellularis (strain PHE/MN1-00).